Consider the following 406-residue polypeptide: Calsequestrin-2 (406 aa).

The N-terminal stretch at Met1–Ala19 is a signal peptide. An N-linked (GlcNAc...) asparagine glycan is attached at Asn335. Residues Val365–Asp406 are disordered. A compositionally biased stretch (acidic residues) spans Glu373–Asp406.

Belongs to the calsequestrin family. In terms of tissue distribution, skeletal and heart muscle.

Its subcellular location is the sarcoplasmic reticulum lumen. Functionally, calsequestrin is a high-capacity, moderate affinity, calcium-binding protein and thus acts as an internal calcium store in muscle. Calcium ions are bound by clusters of acidic residues at the protein surface, especially at the interface between subunits. Can bind around 60 Ca(2+) ions. Regulates the release of lumenal Ca(2+) via the calcium release channel RYR2; this plays an important role in triggering muscle contraction. Plays a role in excitation-contraction coupling in the heart and in regulating the rate of heart beats. The protein is Calsequestrin-2 (CASQ2) of Gallus gallus (Chicken).